The following is a 210-amino-acid chain: Thiamine-phosphate synthase (210 aa).

4-amino-2-methyl-5-(diphosphooxymethyl)pyrimidine contacts are provided by residues 36 to 40 and Asn-68; that span reads QLRIK. Mg(2+) contacts are provided by Asp-69 and Asp-88. Ser-107 serves as a coordination point for 4-amino-2-methyl-5-(diphosphooxymethyl)pyrimidine. 133-135 is a binding site for 2-[(2R,5Z)-2-carboxy-4-methylthiazol-5(2H)-ylidene]ethyl phosphate; it reads TQT. Residue Lys-136 coordinates 4-amino-2-methyl-5-(diphosphooxymethyl)pyrimidine. Residues Gly-165 and 185–186 contribute to the 2-[(2R,5Z)-2-carboxy-4-methylthiazol-5(2H)-ylidene]ethyl phosphate site; that span reads VS.

The protein belongs to the thiamine-phosphate synthase family. Mg(2+) is required as a cofactor.

The enzyme catalyses 2-[(2R,5Z)-2-carboxy-4-methylthiazol-5(2H)-ylidene]ethyl phosphate + 4-amino-2-methyl-5-(diphosphooxymethyl)pyrimidine + 2 H(+) = thiamine phosphate + CO2 + diphosphate. It catalyses the reaction 2-(2-carboxy-4-methylthiazol-5-yl)ethyl phosphate + 4-amino-2-methyl-5-(diphosphooxymethyl)pyrimidine + 2 H(+) = thiamine phosphate + CO2 + diphosphate. The catalysed reaction is 4-methyl-5-(2-phosphooxyethyl)-thiazole + 4-amino-2-methyl-5-(diphosphooxymethyl)pyrimidine + H(+) = thiamine phosphate + diphosphate. The protein operates within cofactor biosynthesis; thiamine diphosphate biosynthesis; thiamine phosphate from 4-amino-2-methyl-5-diphosphomethylpyrimidine and 4-methyl-5-(2-phosphoethyl)-thiazole: step 1/1. Its function is as follows. Condenses 4-methyl-5-(beta-hydroxyethyl)thiazole monophosphate (THZ-P) and 2-methyl-4-amino-5-hydroxymethyl pyrimidine pyrophosphate (HMP-PP) to form thiamine monophosphate (TMP). In Cronobacter sakazakii (strain ATCC BAA-894) (Enterobacter sakazakii), this protein is Thiamine-phosphate synthase.